We begin with the raw amino-acid sequence, 108 residues long: Integration host factor subunit alpha (108 aa).

It belongs to the bacterial histone-like protein family. Heterodimer of an alpha and a beta chain.

In terms of biological role, this protein is one of the two subunits of integration host factor, a specific DNA-binding protein that functions in genetic recombination as well as in transcriptional and translational control. This Methylorubrum populi (strain ATCC BAA-705 / NCIMB 13946 / BJ001) (Methylobacterium populi) protein is Integration host factor subunit alpha.